Reading from the N-terminus, the 92-residue chain is MVRSVWKGPFVDGYLLGKAEKVRSSGRNEVIKIWSRRSTILPQFVGLTFGVHNGNKHIPVSVSEEMVGHKFGEFAPTRTYYGHGADKKAKRK.

Belongs to the universal ribosomal protein uS19 family.

Functionally, protein S19 forms a complex with S13 that binds strongly to the 16S ribosomal RNA. The polypeptide is Small ribosomal subunit protein uS19 (Bartonella quintana (strain Toulouse) (Rochalimaea quintana)).